The following is a 64-amino-acid chain: uncharacterized protein (64 aa).

The protein localises to the host cytoplasm. This is an uncharacterized protein from Enterobacteriaceae (Bacteriophage Mu).